A 330-amino-acid polypeptide reads, in one-letter code: 5-dehydro-2-deoxygluconokinase (330 aa).

Belongs to the carbohydrate kinase PfkB family.

It catalyses the reaction 5-dehydro-2-deoxy-D-gluconate + ATP = 6-phospho-5-dehydro-2-deoxy-D-gluconate + ADP + H(+). It functions in the pathway polyol metabolism; myo-inositol degradation into acetyl-CoA; acetyl-CoA from myo-inositol: step 5/7. Its function is as follows. Catalyzes the phosphorylation of 5-dehydro-2-deoxy-D-gluconate (2-deoxy-5-keto-D-gluconate or DKG) to 6-phospho-5-dehydro-2-deoxy-D-gluconate (DKGP). This chain is 5-dehydro-2-deoxygluconokinase, found in Bacillus velezensis (strain DSM 23117 / BGSC 10A6 / LMG 26770 / FZB42) (Bacillus amyloliquefaciens subsp. plantarum).